A 261-amino-acid chain; its full sequence is Cyclin-J18-like (261 aa).

It belongs to the cyclin family.

In Oryza sativa subsp. japonica (Rice), this protein is Cyclin-J18-like.